The chain runs to 110 residues: Iron-sulfur cluster assembly protein CyaY (110 aa).

It belongs to the frataxin family.

Involved in iron-sulfur (Fe-S) cluster assembly. May act as a regulator of Fe-S biogenesis. The sequence is that of Iron-sulfur cluster assembly protein CyaY from Pseudomonas fluorescens (strain ATCC BAA-477 / NRRL B-23932 / Pf-5).